The sequence spans 409 residues: uncharacterized protein (409 aa).

Transmembrane regions (helical) follow at residues 53–73 (IITL…YVHC), 83–103 (WCYF…NVDG), 115–135 (LGEL…AIVM), 141–161 (IGPY…YLAH), 183–203 (VLFM…WTYG), 205–225 (STTV…VTCL), 243–263 (CLLQ…WASV), 265–285 (NLIT…FGYI), 299–319 (CSLF…SILA), and 329–349 (TVAL…FSYF). A compositionally biased stretch (polar residues) spans 388–401 (EEGSSSIGNSTDDI). The segment at 388–409 (EEGSSSIGNSTDDINPSEIEEI) is disordered.

It belongs to the CDP-alcohol phosphatidyltransferase class-I family.

It localises to the membrane. This is an uncharacterized protein from Dictyostelium discoideum (Social amoeba).